We begin with the raw amino-acid sequence, 1167 residues long: White collar 1 protein (1167 aa).

Disordered stretches follow at residues 1-91 (MNNN…MSGG) and 307-355 (STPA…GASQ). Positions 21–57 (QHQQQQQQQQQQQQQQQQQQQQQQQQQQQQHQHQQQQ) are enriched in low complexity. Composition is skewed to polar residues over residues 70–91 (TPPT…MSGG) and 307–325 (STPA…TQTI). Residues 335–348 (VTNAPTPAPFTSTP) are compositionally biased toward low complexity. The 72-residue stretch at 381-452 (KLKLGAVDMS…KREFVENNAV (72 aa)) folds into the PAS 1 domain. Cysteine 428 carries the S-4a-FMN cysteine modification. The region spanning 469–508 (LINYRKGGKPFLNLLTMIPIPWDTEEIRYFIGFQIDLVEC) is the PAC 1 domain. Residues 574-644 (KQSWDKMLLE…RELKEAQQHT (71 aa)) form the PAS 2 domain. The PAC 2 domain maps to 650–691 (FRIRRKNSGYTWFESHGTLFNEQGKGRKCIILVGRKRPVFAL). Positions 693 to 763 (RKDLELNGGI…RTIEKARKGK (71 aa)) constitute a PAS 3 domain. Residues 849–861 (MSKSGSSDSTGAM) show a composition bias toward low complexity. Disordered regions lie at residues 849–872 (MSKS…GPGQ), 918–952 (KKKR…PSGN), 966–1047 (QTGR…TGST), and 1060–1167 (VNAL…GLSV). The GATA-type zinc finger occupies 934 to 959 (CANCHTRNTPEWRRGPSGNRDLCNSC). A compositionally biased stretch (polar residues) spans 968-977 (GRVSPRTSSR). Positions 986 to 995 (KKSNSPSHSS) are enriched in low complexity. Residues 1004-1033 (DSPSTTTATKNSPSLRGSSTTAPGTITTDS) are compositionally biased toward polar residues. Composition is skewed to low complexity over residues 1036–1047 (AVASSASGTGST) and 1104–1128 (QHQQ…QQHQ).

In terms of assembly, heterodimer of wc-1 and wc-2. FMN binds covalently to cysteine after exposure to blue light and is reversed in the dark.

The protein resides in the nucleus. Its function is as follows. May function as a transcription factor involved in light regulation. Binds and affects blue light regulation of the al-3 gene. Wc-1 and wc-2 proteins interact via homologous PAS domains, bind to promoters of light regulated genes such as frq, and activate transcription. This Neurospora crassa (strain ATCC 24698 / 74-OR23-1A / CBS 708.71 / DSM 1257 / FGSC 987) protein is White collar 1 protein (wc-1).